The primary structure comprises 112 residues: Transmembrane protein 14C (112 aa).

The next 4 helical transmembrane spans lie at 7–27 (VVPL…GGII), 32–52 (AGSV…GLGA), 62–82 (VWVF…RFYH), and 88–108 (PAGL…VSMF).

This sequence belongs to the TMEM14 family.

It localises to the mitochondrion membrane. Required for normal heme biosynthesis. This Homo sapiens (Human) protein is Transmembrane protein 14C (TMEM14C).